Reading from the N-terminus, the 381-residue chain is Putative F-box protein At3g17500 (381 aa).

One can recognise an F-box domain in the interval 1–45 (MMSNLPLDLVEEILSRVPATSLKRLRSTCKSWNNCYKDQRFTEKH).

This Arabidopsis thaliana (Mouse-ear cress) protein is Putative F-box protein At3g17500.